A 315-amino-acid polypeptide reads, in one-letter code: Deoxyhypusine hydroxylase (315 aa).

HEAT-like PBS-type repeat units follow at residues 23–52 (IAKR…LNDK), 56–82 (LRHE…LVKN), 89–115 (VRHE…YSND), 179–205 (NRYR…GLKD), 211–237 (LRHE…CVLD), and 244–270 (VRHE…LLQD). H58, H91, and E92 together coordinate Fe cation. H213, H246, and E247 together coordinate Fe cation.

Belongs to the deoxyhypusine hydroxylase family. Fe(2+) serves as cofactor.

The catalysed reaction is [eIF5A protein]-deoxyhypusine + AH2 + O2 = [eIF5A protein]-hypusine + A + H2O. The protein operates within protein modification; eIF5A hypusination. In terms of biological role, catalyzes the hydroxylation of the N(6)-(4-aminobutyl)-L-lysine intermediate produced by deoxyhypusine synthase/DHPS on a critical lysine of the eukaryotic translation initiation factor 5A/eIF-5A. This is the second step of the post-translational modification of that lysine into an unusual amino acid residue named hypusine. Hypusination is unique to mature eIF-5A factor and is essential for its function. In Dictyostelium discoideum (Social amoeba), this protein is Deoxyhypusine hydroxylase (dohh-1).